A 108-amino-acid chain; its full sequence is ATP-dependent Clp protease adapter protein ClpS (108 aa).

Basic and acidic residues predominate over residues Met1 to Val15. The disordered stretch occupies residues Met1–Val24.

It belongs to the ClpS family. As to quaternary structure, binds to the N-terminal domain of the chaperone ClpA.

In terms of biological role, involved in the modulation of the specificity of the ClpAP-mediated ATP-dependent protein degradation. This is ATP-dependent Clp protease adapter protein ClpS from Stenotrophomonas maltophilia (strain R551-3).